The sequence spans 247 residues: Phycobilisome rod-core linker polypeptide CpcG2 (247 aa).

One can recognise a PBS-linker domain in the interval 11–189 (SSQNQRVPGY…YWRDKLENER (179 aa)).

It belongs to the phycobilisome linker protein family. As to quaternary structure, the phycobilisome is a hemidiscoidal structure that is composed of two distinct substructures: a core complex and a number of rods radiating from the core.

The protein resides in the cellular thylakoid membrane. Functionally, rod-core linker protein required for attachment of phycocyanin to allophycocyanin in cores of phycobilisomes. In terms of biological role, linker polypeptides determine the state of aggregation and the location of the disk-shaped phycobiliprotein units within the phycobilisome and modulate their spectroscopic properties in order to mediate a directed and optimal energy transfer. The chain is Phycobilisome rod-core linker polypeptide CpcG2 (cpcG2) from Mastigocladus laminosus (Fischerella sp.).